Consider the following 259-residue polypeptide: NAD kinase (259 aa).

Asp43 serves as the catalytic Proton acceptor. Residues Asp43–Gly44, Asn111–Glu112, and Arg136 each bind NAD(+).

It belongs to the NAD kinase family. A divalent metal cation serves as cofactor.

The protein resides in the cytoplasm. It carries out the reaction NAD(+) + ATP = ADP + NADP(+) + H(+). Functionally, involved in the regulation of the intracellular balance of NAD and NADP, and is a key enzyme in the biosynthesis of NADP. Catalyzes specifically the phosphorylation on 2'-hydroxyl of the adenosine moiety of NAD to yield NADP. In Mycoplasma pneumoniae (strain ATCC 29342 / M129 / Subtype 1) (Mycoplasmoides pneumoniae), this protein is NAD kinase.